Here is a 422-residue protein sequence, read N- to C-terminus: DNA (cytosine-5)-methyltransferase 3-like (422 aa).

A compositionally biased stretch (polar residues) spans 1–11 (MGSRETPSSCS). Positions 1-50 (MGSRETPSSCSKTHETLNLETPESSSTDPDSPLEEQWPKSAPDLKEEDSM) are disordered. Residues 20-30 (ETPESSSTDPD) are compositionally biased toward low complexity. Positions 76-208 (EVNVNQRNIE…LKAFHDREGA (133 aa)) constitute an ADD domain. The segment at 87-117 (ICLCCGSLQVYAQHPLFEGGICAPCKDKFLE) adopts a GATA-type; atypical zinc-finger fold. The PHD-type; atypical zinc-finger motif lies at 128 to 184 (QSYCTICCSGHTLFICESPDCTRCYCFECVDILVGPGTSERINAMACWVCFLCLPFS).

In terms of assembly, homodimer. Heterotetramer composed of 1 DNMT3A homodimer and 2 DNMT3L subunits (DNMT3L-DNMT3A-DNMT3A-DNMT3L). Interacts with histone H3 (via N-terminus); interaction is strongly inhibited by methylation at lysine 4 (H3K4me). Interacts with EZH2; the interaction is direct. Interacts with SPOCD1.

The protein localises to the nucleus. Its function is as follows. Catalytically inactive regulatory factor of DNA methyltransferases that can either promote or inhibit DNA methylation depending on the context. Essential for the function of DNMT3A and DNMT3B: activates DNMT3A and DNMT3B by binding to their catalytic domain. Acts by accelerating the binding of DNA and S-adenosyl-L-methionine (AdoMet) to the methyltransferases and dissociates from the complex after DNA binding to the methyltransferases. Recognizes unmethylated histone H3 lysine 4 (H3K4me0) and induces de novo DNA methylation by recruitment or activation of DNMT3. Plays a key role in embryonic stem cells and germ cells. In germ cells, required for the methylation of imprinted loci together with DNMT3A. In male germ cells, specifically required to methylate retrotransposons, preventing their mobilization. Plays a key role in embryonic stem cells (ESCs) by acting both as an positive and negative regulator of DNA methylation. While it promotes DNA methylation of housekeeping genes together with DNMT3A and DNMT3B, it also acts as an inhibitor of DNA methylation at the promoter of bivalent genes. Interacts with the EZH2 component of the PRC2/EED-EZH2 complex, preventing interaction of DNMT3A and DNMT3B with the PRC2/EED-EZH2 complex, leading to maintain low methylation levels at the promoters of bivalent genes. Promotes differentiation of ESCs into primordial germ cells by inhibiting DNA methylation at the promoter of RHOX5, thereby activating its expression. The protein is DNA (cytosine-5)-methyltransferase 3-like (Dnmt3l) of Rattus norvegicus (Rat).